Consider the following 327-residue polypeptide: Probable cell division protein WhiA (327 aa).

The segment at residues 275–308 is a DNA-binding region (H-T-H motif); it reads SLEELGRLADPPMTKDAVAGRIRRLLSMADRKAK. The segment at 304–327 is disordered; sequence DRKAKQDGIPDTESAVTPDLLEDA.

Belongs to the WhiA family.

Its function is as follows. Involved in cell division and chromosome segregation. The sequence is that of Probable cell division protein WhiA from Mycolicibacterium gilvum (strain PYR-GCK) (Mycobacterium gilvum (strain PYR-GCK)).